Consider the following 68-residue polypeptide: Peptide TsPep3 (68 aa).

Residues 1–26 (MKLSCGFLLIFLVLSAMIATFSEVEA) form the signal peptide. Intrachain disulfides connect Cys30-Cys38, Cys33-Cys54, Cys37-Cys47, and Cys42-Cys52. A propeptide spanning residues 56–68 (GRSDLNEEFENYQ) is cleaved from the precursor.

As to expression, expressed by the venom gland.

Its subcellular location is the secreted. Its function is as follows. Probable weak potassium channel blocker. This chain is Peptide TsPep3, found in Tityus serrulatus (Brazilian scorpion).